Reading from the N-terminus, the 128-residue chain is Histone H2A (128 aa).

A disordered region spans residues 1-22 (MSGRGKTGGKARAKAKTRSSRA). Serine 2 is modified (N-acetylserine). Serine 2 bears the Phosphoserine mark. Position 6 is an N6-(2-hydroxyisobutyryl)lysine (lysine 6). Lysine 6 carries the post-translational modification N6-acetyllysine. Over residues 7–19 (TGGKARAKAKTRS) the composition is skewed to basic residues. An N6-(2-hydroxyisobutyryl)lysine; alternate modification is found at lysine 10. Position 10 is an N6-lactoyllysine; alternate (lysine 10). The residue at position 10 (lysine 10) is an N6-succinyllysine. Residues lysine 14 and lysine 16 each participate in a glycyl lysine isopeptide (Lys-Gly) (interchain with G-Cter in ubiquitin) cross-link. Lysine 37 carries the N6-(2-hydroxyisobutyryl)lysine; alternate modification. Residues lysine 75 and lysine 76 each carry the N6-(2-hydroxyisobutyryl)lysine modification. Lysine 96 carries the N6-(2-hydroxyisobutyryl)lysine; alternate modification. At lysine 96 the chain carries N6-succinyllysine. Residue lysine 96 is modified to N6-glutaryllysine; alternate. Glutamine 105 is modified (N5-methylglutamine). Position 119 is an N6-(2-hydroxyisobutyryl)lysine; alternate (lysine 119). Lysine 119, lysine 120, and lysine 126 each carry N6-glutaryllysine; alternate. A Glycyl lysine isopeptide (Lys-Gly) (interchain with G-Cter in ubiquitin) cross-link involves residue lysine 120.

In terms of assembly, the nucleosome is a histone octamer containing two molecules each of H2A, H2B, H3 and H4 assembled in one H3-H4 heterotetramer and two H2A-H2B heterodimers. The octamer wraps approximately 147 bp of DNA. Monoubiquitination of Lys-120 (H2AK119Ub) gives a specific tag for epigenetic transcriptional repression. Following DNA double-strand breaks (DSBs), it is ubiquitinated through 'Lys-63' linkage of ubiquitin moieties, leading to the recruitment of repair proteins to sites of DNA damage. H2AK119Ub and ionizing radiation-induced 'Lys-63'-linked ubiquitination are distinct events. In terms of processing, phosphorylation on Ser-2 is enhanced during mitosis. Phosphorylation on Ser-2 directly represses transcription. Post-translationally, glutamine methylation at Gln-105 (H2AQ104me) by FBL is specifically dedicated to polymerase I. It is present at 35S ribosomal DNA locus and impairs binding of the FACT complex. As to expression, expressed and secreted by skin epithelium.

It localises to the nucleus. Its subcellular location is the chromosome. In terms of biological role, core component of nucleosome. Nucleosomes wrap and compact DNA into chromatin, limiting DNA accessibility to the cellular machineries which require DNA as a template. Histones thereby play a central role in transcription regulation, DNA repair, DNA replication and chromosomal stability. DNA accessibility is regulated via a complex set of post-translational modifications of histones, also called histone code, and nucleosome remodeling. Functionally, the secreted form has antibacterial activity against Gram-positive bacteria and antifungal activity against S.cerevisiae. In Oncorhynchus mykiss (Rainbow trout), this protein is Histone H2A.